Consider the following 523-residue polypeptide: 2-oxopropyl-CoM reductase, carboxylating (523 aa).

53–54 (AA) is an FAD binding site. Arginine 56 contacts 2-oxopropyl-coenzyme M. Serine 81 is a binding site for FAD. Cysteine 82 provides a ligand contact to 2-oxopropyl-coenzyme M. An intrachain disulfide couples cysteine 82 to cysteine 87. Alanine 158 provides a ligand contact to FAD. Residues 222–225 (GSKT) and 245–246 (RT) contribute to the NADP(+) site. Aspartate 353 provides a ligand contact to FAD. NADP(+) is bound at residue glutamate 360. Methionine 361 serves as a coordination point for FAD. Arginine 365 contributes to the 2-oxopropyl-coenzyme M binding site. Phenylalanine 501 serves as a coordination point for FAD.

The protein belongs to the class-I pyridine nucleotide-disulfide oxidoreductase family. As to quaternary structure, homodimer. Component II of the aliphatic epoxide carboxylation complex together with components I, III and IV. It depends on FAD as a cofactor.

It carries out the reaction coenzyme M + acetoacetate + NADP(+) = 2-oxopropyl-coenzyme M + CO2 + NADPH. It participates in alkene metabolism; propylene degradation. Its activity is regulated as follows. Inhibited (at 40%) by the coenzyme M analog 2-bromoethanesulfonate (BES). BES is a time-dependent inactivator of dithiothreitol-reduced 2-KPCC, where the redox active cysteines are in the free thiol forms. BES does not inactivate air-oxidized 2-KPCC, where the redox active cysteine pair is in the disulfide form. BES specifically alkylates the interchange thiol that facilitates thioether bond cleavage and enolacetone formation during catalysis. Functionally, involved in aliphatic epoxide carboxylation. Catalyzes the reductive cleavage of the thioether bond of 2-oxopropyl-coenzyme M (2-KPC), and the subsequent carboxylation of the ketopropyl cleavage product, yielding the products acetoacetate and free coenzyme M. This is 2-oxopropyl-CoM reductase, carboxylating from Xanthobacter autotrophicus (strain ATCC BAA-1158 / Py2).